We begin with the raw amino-acid sequence, 418 residues long: Cytochrome P450 monooxygenase ABA2 (418 aa).

Cysteine 355 lines the heme pocket.

The protein belongs to the cytochrome P450 family. Heme serves as cofactor.

It participates in hormone biosynthesis. Its function is as follows. Cytochrome P450 monooxygenase involved in the biosynthesis of abscisic acid (ABA), a phytohormone that acts antagonistically toward salicylic acid (SA), jasmonic acid (JA) and ethylene (ETH) signaling, to impede plant defense responses. During pathogen-host interaction, ABA plays a dual role in disease severity by increasing plant susceptibility and accelerating pathogenesis in the fungus itself. The first step of the pathway catalyzes the reaction from farnesyl diphosphate to alpha-ionylideneethane performed by the alpha-ionylideneethane synthase ABA3 via a three-step reaction mechanism involving 2 neutral intermediates, beta-farnesene and allofarnesene. The cytochrome P450 monooxygenase ABA1 might then be involved in the conversion of alpha-ionylideneethane to alpha-ionylideneacetic acid. Alpha-ionylideneacetic acid is further converted to abscisic acid in 2 steps involving the cytochrome P450 monooxygenase ABA2 and the short-chain dehydrogenase/reductase ABA4, via the intermediates 1'-deoxy-ABA or 1',4'-trans-diol-ABA, depending on the order of action of these 2 enzymes. ABA2 is responsible for the hydroxylation of carbon atom C-1' and ABA4 might be involved in the oxidation of the C-4' carbon atom. In Pyricularia oryzae (strain Y34) (Rice blast fungus), this protein is Cytochrome P450 monooxygenase ABA2.